A 360-amino-acid polypeptide reads, in one-letter code: Geranylgeranyl pyrophosphate synthase 3, chloroplastic (360 aa).

Residues 1 to 39 (MATTVHLSSFSLFIQSRGRRDNSISSVKSLKKRTGLSPS) constitute a chloroplast transit peptide. Residues 24–54 (ISSVKSLKKRTGLSPSSALTSQGGRDMIPPE) form a disordered region. Residues 36 to 46 (LSPSSALTSQG) show a composition bias toward polar residues. Isopentenyl diphosphate is bound by residues Lys-106, Arg-109, and His-138. The Mg(2+) site is built by Asp-145 and Asp-151. Position 156 (Arg-156) interacts with dimethylallyl diphosphate. Arg-157 is an isopentenyl diphosphate binding site. Lys-245, Thr-246, Gln-283, Lys-300, and Lys-310 together coordinate dimethylallyl diphosphate.

This sequence belongs to the FPP/GGPP synthase family. In terms of assembly, monomer. Requires Mg(2+) as cofactor. Mainly expressed in roots.

It localises to the plastid. Its subcellular location is the chloroplast. It catalyses the reaction isopentenyl diphosphate + dimethylallyl diphosphate = (2E)-geranyl diphosphate + diphosphate. The enzyme catalyses isopentenyl diphosphate + (2E)-geranyl diphosphate = (2E,6E)-farnesyl diphosphate + diphosphate. The catalysed reaction is isopentenyl diphosphate + (2E,6E)-farnesyl diphosphate = (2E,6E,10E)-geranylgeranyl diphosphate + diphosphate. It participates in isoprenoid biosynthesis; farnesyl diphosphate biosynthesis; farnesyl diphosphate from geranyl diphosphate and isopentenyl diphosphate: step 1/1. It functions in the pathway isoprenoid biosynthesis; geranyl diphosphate biosynthesis; geranyl diphosphate from dimethylallyl diphosphate and isopentenyl diphosphate: step 1/1. Its pathway is isoprenoid biosynthesis; geranylgeranyl diphosphate biosynthesis; geranylgeranyl diphosphate from farnesyl diphosphate and isopentenyl diphosphate: step 1/1. Its function is as follows. Catalyzes the trans-addition of the three molecules of IPP onto DMAPP to form geranylgeranyl pyrophosphate. In Arabidopsis thaliana (Mouse-ear cress), this protein is Geranylgeranyl pyrophosphate synthase 3, chloroplastic (GGPP3).